The primary structure comprises 276 residues: 3-methyl-2-oxobutanoate hydroxymethyltransferase (276 aa).

The Mg(2+) site is built by aspartate 50 and aspartate 89. Residues 50–51 (DS), aspartate 89, and lysine 119 each bind 3-methyl-2-oxobutanoate. Residue glutamate 121 participates in Mg(2+) binding. Glutamate 188 functions as the Proton acceptor in the catalytic mechanism.

It belongs to the PanB family. As to quaternary structure, homodecamer; pentamer of dimers. The cofactor is Mg(2+).

The protein localises to the cytoplasm. The enzyme catalyses 3-methyl-2-oxobutanoate + (6R)-5,10-methylene-5,6,7,8-tetrahydrofolate + H2O = 2-dehydropantoate + (6S)-5,6,7,8-tetrahydrofolate. It functions in the pathway cofactor biosynthesis; (R)-pantothenate biosynthesis; (R)-pantoate from 3-methyl-2-oxobutanoate: step 1/2. Catalyzes the reversible reaction in which hydroxymethyl group from 5,10-methylenetetrahydrofolate is transferred onto alpha-ketoisovalerate to form ketopantoate. The protein is 3-methyl-2-oxobutanoate hydroxymethyltransferase of Paracoccus denitrificans (strain Pd 1222).